The sequence spans 395 residues: Acid ceramidase (395 aa).

A signal peptide spans Met1–Val20. Residues Cys31 and Cys340 are joined by a disulfide bond. Cys143 acts as the Nucleophile in catalysis. N-linked (GlcNAc...) asparagine glycans are attached at residues Asn195, Asn259, Asn286, and Asn342. Cysteines 388 and 392 form a disulfide.

The protein belongs to the acid ceramidase family. In terms of assembly, heterodimer; disulfide-linked. The heterodimer is composed of the disulfide-linked alpha and beta chains produced by autocatalytic cleavage of the precursor. Post-translationally, N-glycosylated. In terms of processing, proteolytically cleaved into two chains alpha and beta that remain associated via a disulfide bond. Cleavage gives rise to a conformation change that activates the enzyme. The same catalytic Cys residue mediates the autoproteolytic cleavage and subsequent hydrolysis of lipid substrates. The beta chain may undergo an additional C-terminal processing.

It is found in the lysosome. The protein localises to the secreted. It carries out the reaction an N-acylsphing-4-enine + H2O = sphing-4-enine + a fatty acid. The catalysed reaction is N-dodecanoylsphing-4-enine + H2O = dodecanoate + sphing-4-enine. It catalyses the reaction N-tetradecanoylsphing-4-enine + H2O = tetradecanoate + sphing-4-enine. The enzyme catalyses N-hexadecanoylsphing-4-enine + H2O = sphing-4-enine + hexadecanoate. It carries out the reaction N-octadecanoylsphing-4-enine + H2O = sphing-4-enine + octadecanoate. The catalysed reaction is N-dodecanoyl-(4R)-hydroxysphinganine + H2O = (4R)-hydroxysphinganine + dodecanoate. It catalyses the reaction N-(dodecanoyl)-sphinganine + H2O = dodecanoate + sphinganine. The enzyme catalyses N-(acetyl)-sphing-4-enine + H2O = sphing-4-enine + acetate. It carries out the reaction N-(hexanoyl)sphing-4-enine + H2O = hexanoate + sphing-4-enine. The catalysed reaction is N-octanoylsphing-4-enine + H2O = octanoate + sphing-4-enine. It catalyses the reaction N-(9Z-octadecenoyl)-sphing-4-enine + H2O = sphing-4-enine + (9Z)-octadecenoate. The enzyme catalyses N-dodecanoylethanolamine + H2O = dodecanoate + ethanolamine. The protein operates within lipid metabolism; sphingolipid metabolism. Functionally, lysosomal ceramidase that hydrolyzes sphingolipid ceramides into sphingosine and free fatty acids at acidic pH. Ceramides, sphingosine, and its phosphorylated form sphingosine-1-phosphate are bioactive lipids that mediate cellular signaling pathways regulating several biological processes including cell proliferation, apoptosis and differentiation. Has a higher catalytic efficiency towards C12-ceramides versus other ceramides. Also catalyzes the reverse reaction allowing the synthesis of ceramides from fatty acids and sphingosine. For the reverse synthetic reaction, the natural sphingosine D-erythro isomer is more efficiently utilized as a substrate compared to D-erythro-dihydrosphingosine and D-erythro-phytosphingosine, while the fatty acids with chain lengths of 12 or 14 carbons are the most efficiently used. Also has an N-acylethanolamine hydrolase activity. By regulating the levels of ceramides, sphingosine and sphingosine-1-phosphate in the epidermis, mediates the calcium-induced differentiation of epidermal keratinocytes. Also indirectly regulates tumor necrosis factor/TNF-induced apoptosis. By regulating the intracellular balance between ceramides and sphingosine, in adrenocortical cells, probably also acts as a regulator of steroidogenesis. The polypeptide is Acid ceramidase (Bos taurus (Bovine)).